Here is a 1663-residue protein sequence, read N- to C-terminus: TPR repeat-containing protein DDB_G0287407 (1663 aa).

Disordered regions lie at residues 84–109 (RKTQPTSSNGSTSTTTTTTTTTQKGQ) and 326–359 (SEYSSTNDDGENDQSDDDDDNEDDDDFVEKNSNQ). Over residues 89 to 105 (TSSNGSTSTTTTTTTTT) the composition is skewed to low complexity. Over residues 333 to 352 (DDGENDQSDDDDDNEDDDDF) the composition is skewed to acidic residues. TPR repeat units follow at residues 1110–1143 (SDVWFRVASFLEELSQFDGAEVLYNKCRELYINN), 1150–1183 (AKVDRAMGRMYLTMGQNDKSDSKFRLALSIYTKE), 1192–1225 (AITLNLLGTLATNRCKFDEAKQILNQAMNICESK), 1234–1269 (ADIAYSLGSVCFVEPNRKLEVAEAYFARSLELTESK), 1278–1311 (ARILTRLGSLNIEKDTYADAEAFFKAALKIYEAR), and 1320–1353 (SQILRHMISLYEVQENYKMAEQCCIRALAITKKI). 2 disordered regions span residues 1500 to 1528 (VAQPTSFNSPVQPPSPRTQQAIQQGQQQR) and 1544 to 1571 (QKVSSLQQQPQQQQQQQPSQGYGNRQNT). Positions 1516-1547 (RTQQAIQQGQQQRQQVQQQQQQVQQQMSQKVS) form a coiled coil. Low complexity-rich tracts occupy residues 1518 to 1528 (QQAIQQGQQQR) and 1544 to 1563 (QKVSSLQQQPQQQQQQQPSQ).

This chain is TPR repeat-containing protein DDB_G0287407, found in Dictyostelium discoideum (Social amoeba).